Reading from the N-terminus, the 81-residue chain is ATP synthase subunit c, chloroplastic (81 aa).

2 helical membrane passes run alanine 7–glycine 27 and leucine 57–alanine 77.

It belongs to the ATPase C chain family. As to quaternary structure, F-type ATPases have 2 components, F(1) - the catalytic core - and F(0) - the membrane proton channel. F(1) has five subunits: alpha(3), beta(3), gamma(1), delta(1), epsilon(1). F(0) has four main subunits: a(1), b(1), b'(1) and c(10-14). The alpha and beta chains form an alternating ring which encloses part of the gamma chain. F(1) is attached to F(0) by a central stalk formed by the gamma and epsilon chains, while a peripheral stalk is formed by the delta, b and b' chains.

The protein resides in the plastid. The protein localises to the chloroplast thylakoid membrane. F(1)F(0) ATP synthase produces ATP from ADP in the presence of a proton or sodium gradient. F-type ATPases consist of two structural domains, F(1) containing the extramembraneous catalytic core and F(0) containing the membrane proton channel, linked together by a central stalk and a peripheral stalk. During catalysis, ATP synthesis in the catalytic domain of F(1) is coupled via a rotary mechanism of the central stalk subunits to proton translocation. Functionally, key component of the F(0) channel; it plays a direct role in translocation across the membrane. A homomeric c-ring of between 10-14 subunits forms the central stalk rotor element with the F(1) delta and epsilon subunits. The protein is ATP synthase subunit c, chloroplastic of Cryptomeria japonica (Japanese cedar).